A 40-amino-acid chain; its full sequence is Large ribosomal subunit protein bL36B (40 aa).

Belongs to the bacterial ribosomal protein bL36 family.

This is Large ribosomal subunit protein bL36B from Clavibacter michiganensis subsp. michiganensis (strain NCPPB 382).